Consider the following 197-residue polypeptide: Imidazoleglycerol-phosphate dehydratase (197 aa).

This sequence belongs to the imidazoleglycerol-phosphate dehydratase family.

The protein localises to the cytoplasm. The catalysed reaction is D-erythro-1-(imidazol-4-yl)glycerol 3-phosphate = 3-(imidazol-4-yl)-2-oxopropyl phosphate + H2O. It participates in amino-acid biosynthesis; L-histidine biosynthesis; L-histidine from 5-phospho-alpha-D-ribose 1-diphosphate: step 6/9. The protein is Imidazoleglycerol-phosphate dehydratase of Saccharophagus degradans (strain 2-40 / ATCC 43961 / DSM 17024).